Consider the following 499-residue polypeptide: Glutamyl-tRNA(Gln) amidotransferase subunit A (499 aa).

Residues Lys-80 and Ser-155 each act as charge relay system in the active site. Ser-179 acts as the Acyl-ester intermediate in catalysis.

Belongs to the amidase family. GatA subfamily. In terms of assembly, heterotrimer of A, B and C subunits.

The enzyme catalyses L-glutamyl-tRNA(Gln) + L-glutamine + ATP + H2O = L-glutaminyl-tRNA(Gln) + L-glutamate + ADP + phosphate + H(+). Its function is as follows. Allows the formation of correctly charged Gln-tRNA(Gln) through the transamidation of misacylated Glu-tRNA(Gln) in organisms which lack glutaminyl-tRNA synthetase. The reaction takes place in the presence of glutamine and ATP through an activated gamma-phospho-Glu-tRNA(Gln). The protein is Glutamyl-tRNA(Gln) amidotransferase subunit A of Cupriavidus metallidurans (strain ATCC 43123 / DSM 2839 / NBRC 102507 / CH34) (Ralstonia metallidurans).